We begin with the raw amino-acid sequence, 325 residues long: Glutarate 2-hydroxylase (325 aa).

Residues H160, D162, and H292 each contribute to the Fe cation site.

This sequence belongs to the glutarate hydroxylase family. Homotetramer. Requires Fe(2+) as cofactor.

It carries out the reaction glutarate + 2-oxoglutarate + O2 = (S)-2-hydroxyglutarate + succinate + CO2. The protein operates within amino-acid degradation. Its function is as follows. Acts as an alpha-ketoglutarate-dependent dioxygenase catalyzing hydroxylation of glutarate (GA) to L-2-hydroxyglutarate (L2HG). Functions in a L-lysine degradation pathway that proceeds via cadaverine, glutarate and L-2-hydroxyglutarate. The polypeptide is Glutarate 2-hydroxylase (Escherichia coli O127:H6 (strain E2348/69 / EPEC)).